The primary structure comprises 166 residues: Small ribosomal subunit protein uS5 (166 aa).

The S5 DRBM domain maps to 11–74 (LQEKLIAVNR…EKARRNMINV (64 aa)).

It belongs to the universal ribosomal protein uS5 family. In terms of assembly, part of the 30S ribosomal subunit. Contacts proteins S4 and S8.

Functionally, with S4 and S12 plays an important role in translational accuracy. In terms of biological role, located at the back of the 30S subunit body where it stabilizes the conformation of the head with respect to the body. The polypeptide is Small ribosomal subunit protein uS5 (Cronobacter sakazakii (strain ATCC BAA-894) (Enterobacter sakazakii)).